The sequence spans 1303 residues: Latent-transforming growth factor beta-binding protein 3 (1303 aa).

An N-terminal signal peptide occupies residues 1-43 (MPGPRGAAGGLAPEMRGAGAAGLLALLLLLLLLLLGLGGRVEG). N-linked (GlcNAc...) asparagine glycosylation is present at Asn89. In terms of domain architecture, EGF-like 1 spans 109 to 141 (RVVVCPLPCMNGGQCSSRNQCLCPPDFTGRFCQ). Cystine bridges form between Cys113–Cys123, Cys117–Cys129, Cys131–Cys140, Cys279–Cys303, Cys289–Cys316, and Cys304–Cys319. The tract at residues 247–282 (SSNAESAAPSQHLLPHPKPSHPRPPTQKPLGRCFQD) is disordered. Residues 277–331 (GRCFQDTLPKQPCGSNPLPGLTKQEDCCGSIGTAWGQSKCHKCPQLQYTGVQKPG) form the TB 1 domain. N-linked (GlcNAc...) asparagine glycosylation is present at Asn349. The 41-residue stretch at 355–395 (DINECAMPGVCRHGDCLNNPGSYRCVCPPGHSLGPSRTQCI) folds into the EGF-like 2; calcium-binding domain. 7 cysteine pairs are disulfide-bonded: Cys359-Cys370, Cys365-Cys379, Cys381-Cys394, Cys405-Cys428, Cys415-Cys440, Cys429-Cys443, and Cys430-Cys455. The 53-residue stretch at 403 to 455 (SLCFRLVSPEHQCQHPLTTRLTRQLCCCSVGKAWGARCQRCPTDGTAAFKEIC) folds into the TB 2 domain. The disordered stretch occupies residues 478-552 (FSLFLHPDGP…ISRPSPPTMR (75 aa)). Low complexity predominate over residues 529–540 (PTATTTPARPYP). In terms of domain architecture, EGF-like 3 spans 574 to 615 (ETDECRLNQNICGHGECVPGPPDYSCHCNPGYRSHPQHRYCV). 37 disulfides stabilise this stretch: Cys578–Cys590, Cys585–Cys599, Cys601–Cys614, Cys620–Cys632, Cys625–Cys641, Cys664–Cys676, Cys670–Cys685, Cys687–Cys701, Cys748–Cys759, Cys754–Cys768, Cys770–Cys783, Cys789–Cys800, Cys795–Cys809, Cys811–Cys824, Cys830–Cys841, Cys836–Cys850, Cys852–Cys864, Cys870–Cys883, Cys877–Cys892, Cys894–Cys907, Cys919–Cys942, Cys929–Cys954, Cys943–Cys959, Cys944–Cys971, Cys997–Cys1010, Cys1005–Cys1019, Cys1021–Cys1034, Cys1040–Cys1051, Cys1046–Cys1060, Cys1062–Cys1075, Cys1086–Cys1097, Cys1092–Cys1106, Cys1108–Cys1121, Cys1138–Cys1162, Cys1148–Cys1174, Cys1163–Cys1177, and Cys1164–Cys1186. The EGF-like 4; calcium-binding domain maps to 616-659 (DVNECEAEPCGPGRGICMNTGGSYNCHCNRGYRLHVGAGGRSCV). Residues 660–702 (DLNECAKPHLCGDGGFCINFPGHYKCNCYPGYRLKASRPPVCE) form the EGF-like 5; calcium-binding domain. The EGF-like 6; calcium-binding domain maps to 744-784 (DVNECAEGSPCSPGWCENLPGSFRCTCAQGYAPAPDGRSCL). The region spanning 785–825 (DVDECEAGDVCDNGICSNTPGSFQCQCLSGYHLSRDRSHCE) is the EGF-like 7; calcium-binding domain. The region spanning 826-865 (DIDECDFPAACIGGDCINTNGSYRCLCPQGHRLVGGRKCQ) is the EGF-like 8; calcium-binding domain. Residue Asn845 is glycosylated (N-linked (GlcNAc...) asparagine). Positions 866 to 908 (DIDECSQDPSLCLPHGACKNLQGSYVCVCDEGFTPTQDQHGCE) constitute an EGF-like 9; calcium-binding domain. The TB 3 domain maps to 917–971 (KECYLNFDDTVFCDSVLATNVTQQECCCSLGAGWGDHCEIYPCPVYSSAEFHSLC). N-linked (GlcNAc...) asparagine glycosylation occurs at Asn936. The 43-residue stretch at 993-1035 (DIDECMLFGSEICKEGKCVNTQPGYECYCKQGFYYDGNLLECV) folds into the EGF-like 10; calcium-binding domain. The 41-residue stretch at 1036 to 1076 (DVDECLDESNCRNGVCENTRGGYRCACTPPAEYSPAQRQCL) folds into the EGF-like 11; calcium-binding domain. The region spanning 1082-1122 (DVDECQDPAACRPGRCVNLPGSYRCECRPPWVPGPSGRDCQ) is the EGF-like 12; calcium-binding domain. Positions 1136–1186 (DVCWSQRGEDGMCAGPLAGPALTFDDCCCRQGRGWGAQCRPCPPRGAGSHC) constitute a TB 4 domain. A compositionally biased stretch (polar residues) spans 1188-1198 (TSQSESNSFWD). The tract at residues 1188-1219 (TSQSESNSFWDTSPLLLGKPPRDEDSSEEDSD) is disordered. Residues 1254-1298 (DIDECRELNQRGLLCKSERCVNTSGSFRCVCKAGFARSRPHGACV) form the EGF-like 13; calcium-binding domain. 2 disulfide bridges follow: Cys1258–Cys1273 and Cys1268–Cys1282. The N-linked (GlcNAc...) asparagine glycan is linked to Asn1275.

This sequence belongs to the LTBP family. Forms part of the large latent transforming growth factor beta precursor complex; removal is essential for activation of complex. Interacts with EFEMP2. Contains hydroxylated asparagine residues. Post-translationally, two intrachain disulfide bonds from the TB3 domain are rearranged upon TGFB1 binding, and form interchain bonds with TGFB1 propeptide, anchoring it to the extracellular matrix. As to expression, isoform 2: Expressed prominently in heart, skeletal muscle, prostate, testis, small intestine and ovary. Isoform 1: Strongly expressed in pancreas and liver.

It localises to the secreted. The protein localises to the extracellular space. It is found in the extracellular matrix. In terms of biological role, key regulator of transforming growth factor beta (TGFB1, TGFB2 and TGFB3) that controls TGF-beta activation by maintaining it in a latent state during storage in extracellular space. Associates specifically via disulfide bonds with the Latency-associated peptide (LAP), which is the regulatory chain of TGF-beta, and regulates integrin-dependent activation of TGF-beta. This is Latent-transforming growth factor beta-binding protein 3 (LTBP3) from Homo sapiens (Human).